Reading from the N-terminus, the 31-residue chain is Cytochrome b6-f complex subunit 6 (31 aa).

A helical transmembrane segment spans residues 3-23; it reads TIISYFGFLLASIIFTLILFI.

Belongs to the PetL family. In terms of assembly, the 4 large subunits of the cytochrome b6-f complex are cytochrome b6, subunit IV (17 kDa polypeptide, PetD), cytochrome f and the Rieske protein, while the 4 small subunits are PetG, PetL, PetM and PetN. The complex functions as a dimer.

The protein resides in the plastid. It localises to the chloroplast thylakoid membrane. Its function is as follows. Component of the cytochrome b6-f complex, which mediates electron transfer between photosystem II (PSII) and photosystem I (PSI), cyclic electron flow around PSI, and state transitions. PetL is important for photoautotrophic growth as well as for electron transfer efficiency and stability of the cytochrome b6-f complex. This is Cytochrome b6-f complex subunit 6 from Abies homolepis (Nikko fir).